The primary structure comprises 173 residues: Protein GrpE (173 aa).

Over residues 1–28 the composition is skewed to basic and acidic residues; that stretch reads MTEEEKTKSEAEEIEQNNKEEEQEKSVE. Residues 1 to 30 form a disordered region; it reads MTEEEKTKSEAEEIEQNNKEEEQEKSVEEL.

This sequence belongs to the GrpE family. Homodimer.

It localises to the cytoplasm. In terms of biological role, participates actively in the response to hyperosmotic and heat shock by preventing the aggregation of stress-denatured proteins, in association with DnaK and GrpE. It is the nucleotide exchange factor for DnaK and may function as a thermosensor. Unfolded proteins bind initially to DnaJ; upon interaction with the DnaJ-bound protein, DnaK hydrolyzes its bound ATP, resulting in the formation of a stable complex. GrpE releases ADP from DnaK; ATP binding to DnaK triggers the release of the substrate protein, thus completing the reaction cycle. Several rounds of ATP-dependent interactions between DnaJ, DnaK and GrpE are required for fully efficient folding. The sequence is that of Protein GrpE from Methanosphaera stadtmanae (strain ATCC 43021 / DSM 3091 / JCM 11832 / MCB-3).